The chain runs to 897 residues: Translation initiation factor IF-2 (897 aa).

2 disordered regions span residues 69–88 (RKTKSTISVQGTGGKNKEVQ) and 95–304 (RTYV…NAMK). Residues 101-161 (SALEDEQRQA…EEKARIEAQQ (61 aa)) show a composition bias toward basic and acidic residues. Low complexity predominate over residues 162–179 (KARQAQQPAKAAGSTAQQ). 4 stretches are compositionally biased toward basic and acidic residues: residues 180-196 (EAEKMAKREAEELKRQQ), 203-217 (KAEELAAKKAEEARV), 226-239 (WAEEEAARAKESSD), and 277-286 (RREDDRDARN). Residues 287–296 (PRARKGKRGK) are compositionally biased toward basic residues. The 170-residue stretch at 397 to 566 (PRAPVVTIMG…LIQSEVLELK (170 aa)) folds into the tr-type G domain. Residues 406-413 (GHVDHGKT) form a G1 region. 406-413 (GHVDHGKT) serves as a coordination point for GTP. The G2 stretch occupies residues 431–435 (GITQH). Residues 452–455 (DTPG) form a G3 region. GTP-binding positions include 452-456 (DTPGH) and 506-509 (NKID). The G4 stretch occupies residues 506 to 509 (NKID). The tract at residues 542–544 (SAK) is G5.

The protein belongs to the TRAFAC class translation factor GTPase superfamily. Classic translation factor GTPase family. IF-2 subfamily.

It localises to the cytoplasm. In terms of biological role, one of the essential components for the initiation of protein synthesis. Protects formylmethionyl-tRNA from spontaneous hydrolysis and promotes its binding to the 30S ribosomal subunits. Also involved in the hydrolysis of GTP during the formation of the 70S ribosomal complex. In Aeromonas hydrophila subsp. hydrophila (strain ATCC 7966 / DSM 30187 / BCRC 13018 / CCUG 14551 / JCM 1027 / KCTC 2358 / NCIMB 9240 / NCTC 8049), this protein is Translation initiation factor IF-2.